The sequence spans 195 residues: Endoribonuclease YbeY (195 aa).

Zn(2+) contacts are provided by H153, H157, and H163.

It belongs to the endoribonuclease YbeY family. Requires Zn(2+) as cofactor.

Its subcellular location is the cytoplasm. In terms of biological role, single strand-specific metallo-endoribonuclease involved in late-stage 70S ribosome quality control and in maturation of the 3' terminus of the 16S rRNA. The polypeptide is Endoribonuclease YbeY (Prochlorococcus marinus (strain SARG / CCMP1375 / SS120)).